The chain runs to 247 residues: Adenosylcobinamide-GDP ribazoletransferase (247 aa).

Transmembrane regions (helical) follow at residues 34–54 (IVMF…IFIL), 59–79 (CGIP…TGGF), 113–133 (GGLA…ELAL), 138–158 (MLAA…LLMY), 171–191 (VFIG…AVIV), and 194–214 (VLLP…AIFI).

The protein belongs to the CobS family. The cofactor is Mg(2+).

The protein resides in the cell inner membrane. The enzyme catalyses alpha-ribazole + adenosylcob(III)inamide-GDP = adenosylcob(III)alamin + GMP + H(+). It catalyses the reaction alpha-ribazole 5'-phosphate + adenosylcob(III)inamide-GDP = adenosylcob(III)alamin 5'-phosphate + GMP + H(+). It participates in cofactor biosynthesis; adenosylcobalamin biosynthesis; adenosylcobalamin from cob(II)yrinate a,c-diamide: step 7/7. In terms of biological role, joins adenosylcobinamide-GDP and alpha-ribazole to generate adenosylcobalamin (Ado-cobalamin). Also synthesizes adenosylcobalamin 5'-phosphate from adenosylcobinamide-GDP and alpha-ribazole 5'-phosphate. The polypeptide is Adenosylcobinamide-GDP ribazoletransferase (Salmonella schwarzengrund (strain CVM19633)).